Consider the following 666-residue polypeptide: Endogenous retrovirus group K member 21 Gag polyprotein (666 aa).

Residue glycine 2 is the site of N-myristoyl glycine attachment. 2 disordered regions span residues 165–189 (GKGP…AGQV) and 217–264 (ELQY…GSEL). The span at 232–247 (GMPPAPQGRAPYPQPP) shows a compositional bias: pro residues. 2 consecutive CCHC-type zinc fingers follow at residues 544–561 (GKCY…NCPV) and 580–597 (DLCP…QCRS). The interval 598 to 641 (KFDKNGQPLSGNEQRGQPQAPQQTGAFPIQPFVPQGFQGQQPPL) is disordered. A compositionally biased stretch (polar residues) spans 604 to 622 (QPLSGNEQRGQPQAPQQTG). A compositionally biased stretch (low complexity) spans 624–640 (FPIQPFVPQGFQGQQPP).

It belongs to the beta type-B retroviral Gag protein family. HERV class-II K(HML-2) gag subfamily. Myristoylation is essential for retroviral assembly. Alteration of the glycine residue leads to a block in the budding of particles and an accumulation of Gag inside the cell. Post-translationally, specific enzymatic cleavages may yield mature proteins.

The protein localises to the cell membrane. Its function is as follows. The products of the Gag polyproteins of infectious retroviruses perform highly complex orchestrated tasks during the assembly, budding, maturation, and infection stages of the viral replication cycle. During viral assembly, the proteins form membrane associations and self-associations that ultimately result in budding of an immature virion from the infected cell. Gag precursors also function during viral assembly to selectively bind and package two plus strands of genomic RNA. Endogenous Gag proteins may have kept, lost or modified their original function during evolution. The chain is Endogenous retrovirus group K member 21 Gag polyprotein (ERVK-21) from Homo sapiens (Human).